The following is a 238-amino-acid chain: ASEDGGRGPYVQADLAYAYEHITHDYPEPTAPNKNKISTVSDYFRNIRTRSVHPRVSVGYDFGGWRIAADYARYRKWNNNKYSVNIENVRIRKENGIRIDRKTENQENGTFHAVSSLGLSAIYDFQINDKFKPYIGARVAYGHVRHSIDSTKKTIEVTTVPSNAPNGAVTTYNTDPKTQNDYQSNSIRRVGLGVIAGVGFDITPKLTLDAGYRYHNWGRLENTRFKTHEASLGVRYRF.

Alanine 1 is a signal peptide.

Belongs to the opacity porin family.

The protein localises to the cell outer membrane. Functionally, implicated in a number of adherence functions. OPA proteins are implicated in pathogenesis and are subject to phase variation. This chain is Opacity protein opA60 (opaH), found in Neisseria gonorrhoeae.